A 384-amino-acid polypeptide reads, in one-letter code: Chaperone protein DnaJ (384 aa).

Residues 4-68 (DFYDVLGVSR…EKRQMYDQLG (65 aa)) enclose the J domain. Disordered regions lie at residues 74 to 105 (QAQK…GMGG) and 113 to 132 (NNLF…QGRD). Positions 79–105 (GAGGGGGGRGQGNPFGGGGNPFGGMGG) are enriched in gly residues. A CR-type zinc finger spans residues 147–229 (GVERDVTIRR…CRGSGRVRRT (83 aa)). 8 residues coordinate Zn(2+): C160, C163, C177, C180, C203, C206, C217, and C220. 4 CXXCXGXG motif repeats span residues 160–167 (CPECDGEG), 177–184 (CSECNGSG), 203–210 (CRACGGEG), and 217–224 (CSECRGSG).

Belongs to the DnaJ family. In terms of assembly, homodimer. Requires Zn(2+) as cofactor.

It localises to the cytoplasm. Participates actively in the response to hyperosmotic and heat shock by preventing the aggregation of stress-denatured proteins and by disaggregating proteins, also in an autonomous, DnaK-independent fashion. Unfolded proteins bind initially to DnaJ; upon interaction with the DnaJ-bound protein, DnaK hydrolyzes its bound ATP, resulting in the formation of a stable complex. GrpE releases ADP from DnaK; ATP binding to DnaK triggers the release of the substrate protein, thus completing the reaction cycle. Several rounds of ATP-dependent interactions between DnaJ, DnaK and GrpE are required for fully efficient folding. Also involved, together with DnaK and GrpE, in the DNA replication of plasmids through activation of initiation proteins. In Haloferax mediterranei (strain ATCC 33500 / DSM 1411 / JCM 8866 / NBRC 14739 / NCIMB 2177 / R-4) (Halobacterium mediterranei), this protein is Chaperone protein DnaJ.